The chain runs to 346 residues: D-alanine--D-alanine ligase (346 aa).

One can recognise an ATP-grasp domain in the interval 133–324; it reads KLYAQSVGVK…IVDNLAKNIE (192 aa). 159 to 211 is a binding site for ATP; it reads LSFPCILKPARLGSSIGISIVKDESELKYAKDVAFEFDEDVVVEQFVSNIKEY. Residues D284, E296, and N298 each contribute to the Mg(2+) site.

It belongs to the D-alanine--D-alanine ligase family. Mg(2+) is required as a cofactor. Mn(2+) serves as cofactor.

The protein localises to the cytoplasm. The enzyme catalyses 2 D-alanine + ATP = D-alanyl-D-alanine + ADP + phosphate + H(+). Its pathway is cell wall biogenesis; peptidoglycan biosynthesis. Functionally, cell wall formation. The polypeptide is D-alanine--D-alanine ligase (Campylobacter lari (strain RM2100 / D67 / ATCC BAA-1060)).